Reading from the N-terminus, the 371-residue chain is Flagellar P-ring protein (371 aa).

The N-terminal stretch at 1–24 (MSIRVLLFSIFTGFLLAAAGPALA) is a signal peptide. The span at 301-321 (PQPFSSGTTATQPQTDISAQK) shows a compositional bias: polar residues. The interval 301–322 (PQPFSSGTTATQPQTDISAQKT) is disordered.

This sequence belongs to the FlgI family. As to quaternary structure, the basal body constitutes a major portion of the flagellar organelle and consists of four rings (L,P,S, and M) mounted on a central rod.

The protein resides in the periplasm. The protein localises to the bacterial flagellum basal body. Assembles around the rod to form the L-ring and probably protects the motor/basal body from shearing forces during rotation. The sequence is that of Flagellar P-ring protein from Allorhizobium ampelinum (strain ATCC BAA-846 / DSM 112012 / S4) (Agrobacterium vitis (strain S4)).